The sequence spans 261 residues: Dienlactone hydrolase 1 (261 aa).

Residues C147, D194, and H226 contribute to the active site.

It belongs to the dienelactone hydrolase family.

The protein operates within xenobiotic degradation. In terms of biological role, dienlactone hydrolase; part of the Fusarium detoxification of benzoxazolinone cluster 1 (FDB1) involved in the degradation of benzoxazolinones produced by the host plant. Maize, wheat, and rye produce the 2 benzoxazinone phytoanticipins 2,4-dihy-droxy-7-methoxy-1,4-benzoxazin-3-one (DIMBOA) and 2,4-dihydroxy-1,4-benzoxazin-3-one (DIBOA) that, due to their inherent instability once released, spontaneously degrade to the more stable corresponding benzoxazolinones, 6-methoxy-2-benzoxazolinone (MBOA) and 2-benzoxazolinone (BOA), respectively. The first step in the detoxification of benzoxazolinones involves the hydrolysis of the cyclic ester bond of benzoxazolinones by the FDB1 cluster gamma-lactamase MBL1 to aminophenols. MBL1 is able to convert BOA into 2-aminophenol (2-AP), as well as MBOA into 5-methoxy-2-aminophenol (2-AMP). The FDB2 cluster N-malonyltransferase FDB2/NAT1 then metabolizes aminophenols via N-malonylation to non-toxic malonamic acids. FDB2/NAT1 converts 2-AP into N-(2-hydroxyphenyl) malonamic acid (HPMA) and 2-AMP into N-(2-hydroxy-4-methoxyphenyl) malonamic acid (HMPMA). The duplicated dienlactone hydrolases DLH1 and DLH2 may provide redundant function for hydrolyzing the lactone moiety in the BOA molecule. The roles of the amidases and other enzymes encoded by the 2 FDB clusters have not been identified so far. The polypeptide is Dienlactone hydrolase 1 (Gibberella moniliformis (strain M3125 / FGSC 7600) (Maize ear and stalk rot fungus)).